The chain runs to 205 residues: Octanoyltransferase (205 aa).

The BPL/LPL catalytic domain maps to 30 to 205; it reads NSSDELVWLL…ILKKEFYKIF (176 aa). Substrate-binding positions include 68–75, 140–142, and 153–155; these read RGGKYTYH, AFG, and GIA. Cysteine 171 serves as the catalytic Acyl-thioester intermediate.

It belongs to the LipB family.

Its subcellular location is the cytoplasm. The enzyme catalyses octanoyl-[ACP] + L-lysyl-[protein] = N(6)-octanoyl-L-lysyl-[protein] + holo-[ACP] + H(+). It functions in the pathway protein modification; protein lipoylation via endogenous pathway; protein N(6)-(lipoyl)lysine from octanoyl-[acyl-carrier-protein]: step 1/2. Its function is as follows. Catalyzes the transfer of endogenously produced octanoic acid from octanoyl-acyl-carrier-protein onto the lipoyl domains of lipoate-dependent enzymes. Lipoyl-ACP can also act as a substrate although octanoyl-ACP is likely to be the physiological substrate. The polypeptide is Octanoyltransferase (Wolbachia sp. subsp. Brugia malayi (strain TRS)).